Here is a 619-residue protein sequence, read N- to C-terminus: Dihydroxy-acid dehydratase (619 aa).

Aspartate 81 is a binding site for Mg(2+). Cysteine 122 lines the [2Fe-2S] cluster pocket. Mg(2+)-binding residues include aspartate 123 and lysine 124. Position 124 is an N6-carboxylysine (lysine 124). Residue cysteine 201 coordinates [2Fe-2S] cluster. Residue glutamate 496 coordinates Mg(2+). Serine 522 functions as the Proton acceptor in the catalytic mechanism.

This sequence belongs to the IlvD/Edd family. In terms of assembly, homodimer. Requires [2Fe-2S] cluster as cofactor. It depends on Mg(2+) as a cofactor.

It catalyses the reaction (2R)-2,3-dihydroxy-3-methylbutanoate = 3-methyl-2-oxobutanoate + H2O. It carries out the reaction (2R,3R)-2,3-dihydroxy-3-methylpentanoate = (S)-3-methyl-2-oxopentanoate + H2O. Its pathway is amino-acid biosynthesis; L-isoleucine biosynthesis; L-isoleucine from 2-oxobutanoate: step 3/4. It functions in the pathway amino-acid biosynthesis; L-valine biosynthesis; L-valine from pyruvate: step 3/4. Functions in the biosynthesis of branched-chain amino acids. Catalyzes the dehydration of (2R,3R)-2,3-dihydroxy-3-methylpentanoate (2,3-dihydroxy-3-methylvalerate) into 2-oxo-3-methylpentanoate (2-oxo-3-methylvalerate) and of (2R)-2,3-dihydroxy-3-methylbutanoate (2,3-dihydroxyisovalerate) into 2-oxo-3-methylbutanoate (2-oxoisovalerate), the penultimate precursor to L-isoleucine and L-valine, respectively. This is Dihydroxy-acid dehydratase from Paracidovorax citrulli (strain AAC00-1) (Acidovorax citrulli).